Reading from the N-terminus, the 140-residue chain is MRIMGLDYGDRRIGVAISDKLGMTAQGQEVIIRKTPEEDLEVIKGLIDKYEVEEIIVGMPKNMDGSLGPRAEKTRDFIDFLQKSLDTPVKVWDERLSTVEAERVLIEADVSRKKRKGVIDKVAASIILQGYLNYQNKLHG.

It belongs to the YqgF nuclease family.

Its subcellular location is the cytoplasm. In terms of biological role, could be a nuclease involved in processing of the 5'-end of pre-16S rRNA. This chain is Putative pre-16S rRNA nuclease, found in Halothermothrix orenii (strain H 168 / OCM 544 / DSM 9562).